Here is a 279-residue protein sequence, read N- to C-terminus: Phosphate import ATP-binding protein PstB 1 (279 aa).

One can recognise an ABC transporter domain in the interval 26–274 (VMDCKLDKIF…PREQLTSDYI (249 aa)). An ATP-binding site is contributed by 59-66 (GPSGCGKS).

It belongs to the ABC transporter superfamily. Phosphate importer (TC 3.A.1.7) family. In terms of assembly, the complex is composed of two ATP-binding proteins (PstB), two transmembrane proteins (PstC and PstA) and a solute-binding protein (PstS).

Its subcellular location is the cell inner membrane. It catalyses the reaction phosphate(out) + ATP + H2O = ADP + 2 phosphate(in) + H(+). Functionally, part of the ABC transporter complex PstSACB involved in phosphate import. Responsible for energy coupling to the transport system. The chain is Phosphate import ATP-binding protein PstB 1 from Pseudomonas putida (strain ATCC 47054 / DSM 6125 / CFBP 8728 / NCIMB 11950 / KT2440).